The following is a 172-amino-acid chain: Cold-inducible RNA-binding protein (172 aa).

The RRM domain occupies 6–84; sequence GKLFVGGLSF…RQIRVDQAGK (79 aa). Residues 69–172 form a disordered region; it reads GKSVDGRQIR…SYDSYATHNE (104 aa). Composition is skewed to gly residues over residues 93–106 and 114–125; these read YRGG…FFRG and FSRGGGDRGYGG. Residues serine 130, serine 138, serine 146, serine 156, serine 159, and serine 163 each carry the phosphoserine modification. Over residues 138–172 the composition is skewed to low complexity; that stretch reads SRDYYSSRSQSGGYSDRSSGGSYRDSYDSYATHNE.

As to quaternary structure, interacts with EIF4G1. Associates with ribosomes. Post-translationally, methylated on arginine residues. Methylation of the RGG motifs is a prerequisite for recruitment into SGs. In terms of processing, phosphorylated by CK2, GSK3A and GSK3B. Phosphorylation by GSK3B increases RNA-binding activity to the TXN 3'-UTR transcript upon exposure to UV radiation.

The protein localises to the nucleus. The protein resides in the nucleoplasm. It is found in the cytoplasm. Functionally, cold-inducible mRNA binding protein that plays a protective role in the genotoxic stress response by stabilizing transcripts of genes involved in cell survival. Acts as a translational activator. Seems to play an essential role in cold-induced suppression of cell proliferation. Binds specifically to the 3'-untranslated regions (3'-UTRs) of stress-responsive transcripts RPA2 and TXN. Acts as a translational repressor. Promotes assembly of stress granules (SGs), when overexpressed. This Pongo abelii (Sumatran orangutan) protein is Cold-inducible RNA-binding protein (CIRBP).